Consider the following 1625-residue polypeptide: Probable cation-transporting ATPase I (1625 aa).

A run of 8 helical transmembrane segments spans residues 148–168, 177–197, 358–378, 637–657, 673–693, 778–798, 968–988, and 997–1017; these read VVSA…PNSA, LAIL…GATV, LIAA…AGAI, ASES…LLLV, WLNP…WSAA, ILAV…ALLV, LTSK…ALAL, and AVAD…PLVA. Catalysis depends on aspartate 1053, which acts as the 4-aspartylphosphate intermediate. 2 residues coordinate Mg(2+): aspartate 1340 and aspartate 1344. A run of 3 helical transmembrane segments spans residues 1401–1421, 1432–1452, and 1547–1567; these read ILVG…AFGA, LLVN…TSQF, and VIAT…TPVI.

This sequence belongs to the cation transport ATPase (P-type) (TC 3.A.3) family.

It localises to the cell membrane. It carries out the reaction ATP + H2O = ADP + phosphate + H(+). The polypeptide is Probable cation-transporting ATPase I (ctpI) (Mycobacterium tuberculosis (strain CDC 1551 / Oshkosh)).